The chain runs to 988 residues: uncharacterized protein (988 aa).

The N-terminal stretch at 1-17 (MIRLVFLFLLVVLSVEL) is a signal peptide. Residues 111 to 176 (YQNPSTFPST…SKLNQKSSKS (66 aa)) are disordered. Residues 114–140 (PSTFPSTTTASTTTSTTTMPPTYQTTT) are compositionally biased toward low complexity. N-linked (GlcNAc...) asparagine glycans are attached at residues Asn247, Asn389, Asn529, and Asn601. A helical transmembrane segment spans residues 690-710 (IMIFTIFSVLSALTCLMCMYL). N-linked (GlcNAc...) asparagine glycosylation occurs at Asn720. The next 6 helical transmembrane spans lie at 721-741 (LTAV…AFII), 753-773 (LLFP…TVLI), 784-804 (VLIA…WLLL), 832-852 (MILL…IFAL), 864-884 (LMIS…LPLI), and 891-911 (TVMA…SHTG). Residues 966-988 (RSEDTLRRNTSLYGTEGYELPTP) form a disordered region. Asn974 carries N-linked (GlcNAc...) asparagine glycosylation.

It localises to the membrane. This is an uncharacterized protein from Caenorhabditis elegans.